The sequence spans 309 residues: Ribokinase (309 aa).

Residues 14–16, 42–46, and E143 each bind substrate; these read NAD and GKGAN. ATP contacts are provided by residues N187 and 223–228; that span reads TLGSRG. K(+) contacts are provided by D249 and I251. Residues 254–255 and H279 contribute to the ATP site; that span reads GD. D255 provides a ligand contact to substrate. The active-site Proton acceptor is the D255. Positions 285, 288, 290, and 294 each coordinate K(+).

Belongs to the carbohydrate kinase PfkB family. Ribokinase subfamily. Homodimer. The cofactor is Mg(2+).

Its subcellular location is the cytoplasm. The enzyme catalyses D-ribose + ATP = D-ribose 5-phosphate + ADP + H(+). It participates in carbohydrate metabolism; D-ribose degradation; D-ribose 5-phosphate from beta-D-ribopyranose: step 2/2. Its activity is regulated as follows. Activated by a monovalent cation that binds near, but not in, the active site. The most likely occupant of the site in vivo is potassium. Ion binding induces a conformational change that may alter substrate affinity. In terms of biological role, catalyzes the phosphorylation of ribose at O-5 in a reaction requiring ATP and magnesium. The resulting D-ribose-5-phosphate can then be used either for sythesis of nucleotides, histidine, and tryptophan, or as a component of the pentose phosphate pathway. The chain is Ribokinase from Escherichia coli O157:H7.